Consider the following 362-residue polypeptide: Ciliary neurotrophic factor receptor subunit alpha (362 aa).

The first 19 residues, 1-19 (MANPVPSACCVVLAAVVVV), serve as a signal peptide directing secretion. Residues 23 to 103 (RHSQQDSHIQ…HLKYQTYLRV (81 aa)) enclose the Ig-like C2-type domain. A disulfide bond links Cys44 and Cys87. Residues Asn58, Asn68, Asn140, and Asn188 are each glycosylated (N-linked (GlcNAc...) asparagine). Fibronectin type-III domains are found at residues 106 to 203 (PPKE…VKPD) and 204 to 304 (PPES…TEEP). The short motif at 288 to 292 (WSDWS) is the WSXWS motif element. A lipid anchor (GPI-anchor amidated aspartate) is attached at Asp334. Residues 335–362 (KGAGVGSGAVAVCWTAGLVLAAYGVLFI) constitute a propeptide, removed in mature form.

Belongs to the type I cytokine receptor family. Type 3 subfamily. In terms of assembly, heterotrimer of the alpha subunit, LIFR and IL6ST. Highly expressed in nervous system. Also found in skeletal muscle.

It localises to the cell membrane. Binds to CNTF (GPA). The alpha subunit provides the receptor specificity. The sequence is that of Ciliary neurotrophic factor receptor subunit alpha (CNTFR) from Gallus gallus (Chicken).